Reading from the N-terminus, the 50-residue chain is Protease inhibitor 2 (50 aa).

The Kazal-like domain maps to 2-50 (EDCVGRKACTREWYPVCGSDGVTYSNPCNFSAQQEQCDPNITIAHMGEC). Intrachain disulfides connect Cys-10-Cys-29 and Cys-18-Cys-50. Asn-30 and Asn-41 each carry an N-linked (GlcNAc...) asparagine glycan.

In terms of biological role, serine protease inhibitor. Strongly inhibits human neutrophil elastase and trypsin, also inhibits porcine pancreatic elastase and subtilisin A. Does not inhibit chymotrypsin, plasma kallikrein, pancreatic kallikrein, thrombin or papain. The polypeptide is Protease inhibitor 2 (Cenchritis muricatus (Beaded periwinkle)).